Here is a 331-residue protein sequence, read N- to C-terminus: Beta-hexosaminidase (331 aa).

Substrate-binding positions include aspartate 60, arginine 68, arginine 133, and 163-164 (KH). The active-site Proton donor/acceptor is the histidine 176. The active-site Nucleophile is aspartate 247.

This sequence belongs to the glycosyl hydrolase 3 family. NagZ subfamily.

The protein localises to the cytoplasm. The catalysed reaction is Hydrolysis of terminal non-reducing N-acetyl-D-hexosamine residues in N-acetyl-beta-D-hexosaminides.. The protein operates within cell wall biogenesis; peptidoglycan recycling. In terms of biological role, plays a role in peptidoglycan recycling by cleaving the terminal beta-1,4-linked N-acetylglucosamine (GlcNAc) from peptide-linked peptidoglycan fragments, giving rise to free GlcNAc, anhydro-N-acetylmuramic acid and anhydro-N-acetylmuramic acid-linked peptides. This chain is Beta-hexosaminidase, found in Xanthomonas campestris pv. campestris (strain B100).